A 286-amino-acid polypeptide reads, in one-letter code: METFKTHITGQFNATVSSITPFAKKTTHYLRTKIGSRVEELSLPEDYVELEQQVDSLKEAYNLVLPIVETVEVDGYDYPTNFRDSITDFGKTVSGKVRNLGNLTPLEQTPLASVGKNLEEKEAAAKPSRTLYNAISRAASEATTKMGAGNPLSSAFGQISVLEEKVGNLQGERDSAISKNFCEQVRAVLYPRFAEAHRVKADVQDKRLQLEMAKLDVESAKPENLEHCKSAVRSAEDELNGAIEHAKILYEQILNKDYNTDLLRSIIKNQLKFHQDAAAALSDITI.

It localises to the cytoplasm. Its function is as follows. Has a role in meiosis. This chain is Meiotically up-regulated gene 64 protein (mug64), found in Schizosaccharomyces pombe (strain 972 / ATCC 24843) (Fission yeast).